We begin with the raw amino-acid sequence, 201 residues long: Recombination protein RecR (201 aa).

The C4-type zinc finger occupies 59–74 (CEICGNMDTENICRIC). The Toprim domain occupies 82–177 (SIIAIVETVA…KISRLASGIP (96 aa)).

This sequence belongs to the RecR family.

May play a role in DNA repair. It seems to be involved in an RecBC-independent recombinational process of DNA repair. It may act with RecF and RecO. The protein is Recombination protein RecR of Rickettsia rickettsii (strain Iowa).